Here is a 36-residue protein sequence, read N- to C-terminus: Asteropin-A (36 aa).

3 disulfides stabilise this stretch: Cys-2–Cys-18, Cys-9–Cys-25, and Cys-17–Cys-35.

Functionally, sialidase inhibitor. Competitively inhibits bacterial sialidases, but not viral sialidases. Does not inhibit glycosidases or proteases. Has no antitumor activity. The polypeptide is Asteropin-A (Asteropus simplex (Marine sponge)).